Here is a 634-residue protein sequence, read N- to C-terminus: Chaperone protein DnaK (634 aa).

The residue at position 193 (Thr193) is a Phosphothreonine; by autocatalysis. The tract at residues 597 to 634 (GNANNTSSTESTTTNNNNEEDSKVVDSDYQEIDKKDGK) is disordered. Residues 600 to 613 (NNTSSTESTTTNNN) are compositionally biased toward low complexity. A compositionally biased stretch (basic and acidic residues) spans 616–634 (EDSKVVDSDYQEIDKKDGK).

This sequence belongs to the heat shock protein 70 family.

In terms of biological role, acts as a chaperone. This Ehrlichia canis (strain Jake) protein is Chaperone protein DnaK.